The chain runs to 392 residues: Glutamate 5-kinase (392 aa).

K17 serves as a coordination point for ATP. Residues S57, D144, and N156 each coordinate substrate. Residue 176-177 (SD) participates in ATP binding. Residues 282–359 (AGILSVDAGA…AEIEALLGYA (78 aa)) form the PUA domain. Residues 373 to 392 (TEQTGRKAGKSTKKKDEAHA) are disordered.

The protein belongs to the glutamate 5-kinase family.

The protein localises to the cytoplasm. It catalyses the reaction L-glutamate + ATP = L-glutamyl 5-phosphate + ADP. The protein operates within amino-acid biosynthesis; L-proline biosynthesis; L-glutamate 5-semialdehyde from L-glutamate: step 1/2. Functionally, catalyzes the transfer of a phosphate group to glutamate to form L-glutamate 5-phosphate. The protein is Glutamate 5-kinase of Allorhizobium ampelinum (strain ATCC BAA-846 / DSM 112012 / S4) (Agrobacterium vitis (strain S4)).